A 189-amino-acid polypeptide reads, in one-letter code: MIKTTPHKIVILMGILLSPSVFATDINVEFTATVKATTCNITLTGNNVTNDGNNNYTLRIPKMGLDKIANKTTESQADFKLVASGCSSGISWIDTTLTGNASSSSPKLIIPQSGDSSSTTSNIGMGFKKRTTDDATFLKPNSAEKIRWSTDEMQPDKGLEMTVALRETDAGQGVPGNFRALATFNFIYQ.

Positions 1–23 are cleaved as a signal peptide; sequence MIKTTPHKIVILMGILLSPSVFA. The tract at residues 104–125 is disordered; it reads SSPKLIIPQSGDSSSTTSNIGM. A compositionally biased stretch (polar residues) spans 113-123; sequence SGDSSSTTSNI.

It belongs to the fimbrial protein family.

The protein resides in the fimbrium. In terms of biological role, part of the yadCKLM-htrE-yadVN fimbrial operon. Could contribute to adhesion to various surfaces in specific environmental niches. This is an uncharacterized protein from Escherichia coli (strain K12).